Consider the following 499-residue polypeptide: Increased recombination centers protein 15 (499 aa).

47-56 (DQRASLGGAY) provides a ligand contact to FAD.

The protein belongs to the class-I pyridine nucleotide-disulfide oxidoreductase family.

The protein resides in the cytoplasm. The polypeptide is Increased recombination centers protein 15 (IRC15) (Saccharomyces cerevisiae (strain ATCC 204508 / S288c) (Baker's yeast)).